The chain runs to 471 residues: ATP synthase subunit beta (471 aa).

156 to 163 (GGAGVGKT) lines the ATP pocket.

This sequence belongs to the ATPase alpha/beta chains family. As to quaternary structure, F-type ATPases have 2 components, CF(1) - the catalytic core - and CF(0) - the membrane proton channel. CF(1) has five subunits: alpha(3), beta(3), gamma(1), delta(1), epsilon(1). CF(0) has three main subunits: a(1), b(2) and c(9-12). The alpha and beta chains form an alternating ring which encloses part of the gamma chain. CF(1) is attached to CF(0) by a central stalk formed by the gamma and epsilon chains, while a peripheral stalk is formed by the delta and b chains.

Its subcellular location is the cell membrane. It catalyses the reaction ATP + H2O + 4 H(+)(in) = ADP + phosphate + 5 H(+)(out). Produces ATP from ADP in the presence of a proton gradient across the membrane. The catalytic sites are hosted primarily by the beta subunits. This is ATP synthase subunit beta from Lawsonia intracellularis (strain PHE/MN1-00).